A 248-amino-acid chain; its full sequence is Adenosylcobinamide-GDP ribazoletransferase (248 aa).

Helical transmembrane passes span L34–I54, F58–G78, A113–L133, A139–V159, I185–A205, and D227–F247.

Belongs to the CobS family. The cofactor is Mg(2+).

The protein localises to the cell membrane. The catalysed reaction is alpha-ribazole + adenosylcob(III)inamide-GDP = adenosylcob(III)alamin + GMP + H(+). It carries out the reaction alpha-ribazole 5'-phosphate + adenosylcob(III)inamide-GDP = adenosylcob(III)alamin 5'-phosphate + GMP + H(+). The protein operates within cofactor biosynthesis; adenosylcobalamin biosynthesis; adenosylcobalamin from cob(II)yrinate a,c-diamide: step 7/7. In terms of biological role, joins adenosylcobinamide-GDP and alpha-ribazole to generate adenosylcobalamin (Ado-cobalamin). Also synthesizes adenosylcobalamin 5'-phosphate from adenosylcobinamide-GDP and alpha-ribazole 5'-phosphate. The chain is Adenosylcobinamide-GDP ribazoletransferase from Acetivibrio thermocellus (strain ATCC 27405 / DSM 1237 / JCM 9322 / NBRC 103400 / NCIMB 10682 / NRRL B-4536 / VPI 7372) (Clostridium thermocellum).